We begin with the raw amino-acid sequence, 126 residues long: MSDESQINQENQKETRKKDDSPLTTDEVIKDKGKVDFTKGGVENYKFYPDNPVNHRHKYRWSMKEPSKYYDPCEESRQASINCMLRNQEDKTVCQDFFDAYKECKKDFFNKKVADRRQGKGGWGIW.

Polar residues predominate over residues 1 to 10 (MSDESQINQE). The interval 1–29 (MSDESQINQENQKETRKKDDSPLTTDEVI) is disordered. Positions 11–29 (NQKETRKKDDSPLTTDEVI) are enriched in basic and acidic residues. Positions 70 to 112 (YDPCEESRQASINCMLRNQEDKTVCQDFFDAYKECKKDFFNKK) constitute a CHCH domain. 2 consecutive short sequence motifs (cx9C motif) follow at residues 73–83 (CEESRQASINC) and 94–104 (CQDFFDAYKEC). 2 disulfides stabilise this stretch: cysteine 73–cysteine 104 and cysteine 83–cysteine 94.

It belongs to the COX23 family.

It is found in the mitochondrion intermembrane space. Required for the assembly of cytochrome c oxidase. This is Cytochrome c oxidase-assembly factor COX23, mitochondrial (COX23) from Debaryomyces hansenii (strain ATCC 36239 / CBS 767 / BCRC 21394 / JCM 1990 / NBRC 0083 / IGC 2968) (Yeast).